Consider the following 96-residue polypeptide: Large ribosomal subunit protein uL23 (96 aa).

It belongs to the universal ribosomal protein uL23 family. In terms of assembly, part of the 50S ribosomal subunit. Contacts protein L29, and trigger factor when it is bound to the ribosome.

In terms of biological role, one of the early assembly proteins it binds 23S rRNA. One of the proteins that surrounds the polypeptide exit tunnel on the outside of the ribosome. Forms the main docking site for trigger factor binding to the ribosome. The sequence is that of Large ribosomal subunit protein uL23 from Desulfovibrio desulfuricans (strain ATCC 27774 / DSM 6949 / MB).